The sequence spans 483 residues: Glutamyl-tRNA(Gln) amidotransferase subunit A (483 aa).

Catalysis depends on charge relay system residues Lys76 and Ser151. Residue Ser175 is the Acyl-ester intermediate of the active site.

It belongs to the amidase family. GatA subfamily. As to quaternary structure, heterotrimer of A, B and C subunits.

It catalyses the reaction L-glutamyl-tRNA(Gln) + L-glutamine + ATP + H2O = L-glutaminyl-tRNA(Gln) + L-glutamate + ADP + phosphate + H(+). In terms of biological role, allows the formation of correctly charged Gln-tRNA(Gln) through the transamidation of misacylated Glu-tRNA(Gln) in organisms which lack glutaminyl-tRNA synthetase. The reaction takes place in the presence of glutamine and ATP through an activated gamma-phospho-Glu-tRNA(Gln). This chain is Glutamyl-tRNA(Gln) amidotransferase subunit A, found in Ectopseudomonas mendocina (strain ymp) (Pseudomonas mendocina).